The following is a 54-amino-acid chain: MKFTLALLTTLCASLASAGVVITPVRPNQVIPANSGDCFFGVVTPQGCAPLRKS.

An N-terminal signal peptide occupies residues 1–18; it reads MKFTLALLTTLCASLASA. A disulfide bridge connects residues cysteine 38 and cysteine 48.

Belongs to the MC69 virulence factor family.

Its subcellular location is the secreted. Its function is as follows. Secreted protein required for appressorial penetration of intact host epidermal cells and for pathogenicity. In Colletotrichum orbiculare (strain 104-T / ATCC 96160 / CBS 514.97 / LARS 414 / MAFF 240422) (Cucumber anthracnose fungus), this protein is Secreted virulence factor MC69.